The chain runs to 885 residues: MADAHSDGRTGSTTPGKITRPETTGTKNTHSDNASTSAPGNSASASASASASASTSTLHSNSSTTTSSPQRMINHNPSTSSLRNINTGGTRIETGTGRGTGAVQNAALTGAALAFSNAMGKATPVVPNKFAGKTQLGGNGLGGKDGALAAATKVRVGGGGSPNNGGGRTRSPSKVSVTDPGMGGEQQIYGYQKVGRERTGESETDGGSVISGGLEYQGGQRIPQKRNQRPNGHLLPPFSGTSETSPNVKNNSAAFMAANLAAKRSRENSPSHTGQNYGMGMGMGKQASPLPSRRQSYASSIDSTDRRVDLSSIPPTSNLVEMWEQPDKGVKKERGLVSNRGNEIVNRQVQKRPVSSHAPIPVLKPAGLTRPVSSHASESSVQSRIASSQAPISEQVKSKPKPVIHPRPSSSQASVPGPSKPVSKPDVQPPPVSSHTTSSEAPKPSPKPPVQKPAIYNTRPASSHGPVPNLSTKPSIQKLSRPVSSHGPPPAKPSAKPSLQSIRPTSSHTLESTESSSKASVQKPSLPPPRRTPANLSVSGDQSTSLPMHAPQPRSMQSPILTTADRTEPASESPTQSPRSSSTTKTPRRSSKPTLPSRPPVSRQSYNNDADDDESSDDSFVSASSQPKPKSPSFRAKIAEQKRLQTSTYAPSMTAKTLSNAMVAGYLASSRASTPSISPGVIQPPAPPPPRRLKKFFHSEHSRTPTPPQNTLSATGVPTMKTTMRKPKTEKELKEEEGEGEKRRAKKHLVKKHPNKHDEGNRKRWRDEITEKERKRYEALWASNKGLFPYTMDPRGEIIEIEGAADTVPGMVVKDLWERSRLGGDVLEEVWELVHGKGYWGRQKQKRFGRLERDEFVVGLWLIDQRLKGRKLPARVNHSLWASAS.

5 disordered regions span residues 1–98 (MADA…GTGR), 154–246 (VRVG…ETSP), 262–652 (AKRS…YAPS), 671–694 (RAST…RRLK), and 723–762 (TMRK…EGNR). Positions 9–32 (RTGSTTPGKITRPETTGTKNTHSD) are enriched in polar residues. A compositionally biased stretch (low complexity) spans 33–68 (NASTSAPGNSASASASASASASTSTLHSNSSTTTSS). The segment covering 69–83 (PQRMINHNPSTSSLR) has biased composition (polar residues). Low complexity predominate over residues 84–95 (NINTGGTRIETG). The segment covering 156-168 (VGGGGSPNNGGGR) has biased composition (gly residues). Polar residues predominate over residues 293–302 (RRQSYASSID). Basic and acidic residues predominate over residues 325 to 335 (QPDKGVKKERG). A compositionally biased stretch (polar residues) spans 339-348 (NRGNEIVNRQ). Low complexity-rich tracts occupy residues 373–383 (SSHASESSVQS) and 414–425 (SVPGPSKPVSKP). The segment covering 469–478 (NLSTKPSIQK) has biased composition (polar residues). A compositionally biased stretch (low complexity) spans 505–517 (TSSHTLESTESSS). Residues 534-546 (ANLSVSGDQSTSL) are compositionally biased toward polar residues. 2 stretches are compositionally biased toward low complexity: residues 573 to 585 (SPTQ…STTK) and 618 to 633 (DSFV…KSPS). Positions 743 to 755 (RRAKKHLVKKHPN) are enriched in basic residues. Positions 773–879 (ERKRYEALWA…RKLPARVNHS (107 aa)) constitute an EH domain.

Belongs to the IRS4 family.

In terms of biological role, positive regulator of phosphatidylinositol 4,5-bisphosphate turnover and negatively regulates signaling through the cell integrity pathway. Involved in rDNA silencing. The protein is Increased rDNA silencing protein 4 (irs4) of Botryotinia fuckeliana (strain B05.10) (Noble rot fungus).